The sequence spans 138 residues: Cysteine desulfuration protein SufE (138 aa).

Residue C51 is the Cysteine persulfide intermediate of the active site.

The protein belongs to the SufE family. In terms of assembly, homodimer. Interacts with SufS.

The protein localises to the cytoplasm. Its pathway is cofactor biosynthesis; iron-sulfur cluster biosynthesis. Functionally, participates in cysteine desulfuration mediated by SufS. Cysteine desulfuration mobilizes sulfur from L-cysteine to yield L-alanine and constitutes an essential step in sulfur metabolism for biosynthesis of a variety of sulfur-containing biomolecules. Functions as a sulfur acceptor for SufS, by mediating the direct transfer of the sulfur atom from the S-sulfanylcysteine of SufS, an intermediate product of cysteine desulfuration process. The sequence is that of Cysteine desulfuration protein SufE from Escherichia coli O17:K52:H18 (strain UMN026 / ExPEC).